Here is a 282-residue protein sequence, read N- to C-terminus: D-alanine aminotransferase (282 aa).

Y32 lines the substrate pocket. Position 51 (R51) interacts with pyridoxal 5'-phosphate. 2 residues coordinate substrate: R99 and H101. K146 functions as the Proton acceptor in the catalytic mechanism. N6-(pyridoxal phosphate)lysine is present on K146. E178 contacts pyridoxal 5'-phosphate.

The protein belongs to the class-IV pyridoxal-phosphate-dependent aminotransferase family. Homodimer. Pyridoxal 5'-phosphate is required as a cofactor.

The catalysed reaction is D-alanine + 2-oxoglutarate = D-glutamate + pyruvate. Its function is as follows. Acts on the D-isomers of alanine, leucine, aspartate, glutamate, aminobutyrate, norvaline and asparagine. The enzyme transfers an amino group from a substrate D-amino acid to the pyridoxal phosphate cofactor to form pyridoxamine and an alpha-keto acid in the first half-reaction. The second half-reaction is the reverse of the first, transferring the amino group from the pyridoxamine to a second alpha-keto acid to form the product D-amino acid via a ping-pong mechanism. This is an important process in the formation of D-alanine and D-glutamate, which are essential bacterial cell wall components. The protein is D-alanine aminotransferase (dat) of Staphylococcus haemolyticus.